The following is a 271-amino-acid chain: MLDIIELKDNYIKFSISGITPAIANSIRRTLINDIPKLAIENVVFHHGEIRDSEGNVYDSSLPLFDEVVALRLGLIPLKTDLKMNFRDQCSCNGEGCDLCTVKYSINKLGPADVFSSDLIPINNPDLKPVDPMIPIVKLKKGQAMLVTCEAIMGRGKDHAKWQVTSGVSYKYHREFKINKNELENWSFYKDKCPKSVISENENEITFTDDVECRYLQQLFDEKSGVTITEDDTKFIFQFETDGSLTAIETLDYALKRLKERFNNLMESLSE.

The protein belongs to the archaeal Rpo3/eukaryotic RPB3 RNA polymerase subunit family. In terms of assembly, part of the RNA polymerase complex.

Its subcellular location is the cytoplasm. The enzyme catalyses RNA(n) + a ribonucleoside 5'-triphosphate = RNA(n+1) + diphosphate. Functionally, DNA-dependent RNA polymerase (RNAP) catalyzes the transcription of DNA into RNA using the four ribonucleoside triphosphates as substrates. This chain is DNA-directed RNA polymerase subunit Rpo3, found in Picrophilus torridus (strain ATCC 700027 / DSM 9790 / JCM 10055 / NBRC 100828 / KAW 2/3).